Reading from the N-terminus, the 397-residue chain is Acetate kinase (397 aa).

Mg(2+) is bound at residue Asn8. Lys15 contacts ATP. Arg89 is a substrate binding site. The active-site Proton donor/acceptor is the Asp146. ATP is bound by residues His206–Gly210, Asp283–Arg285, and Gly331–Asn335. Residue Glu383 participates in Mg(2+) binding.

This sequence belongs to the acetokinase family. In terms of assembly, homodimer. It depends on Mg(2+) as a cofactor. Mn(2+) is required as a cofactor.

Its subcellular location is the cytoplasm. It catalyses the reaction acetate + ATP = acetyl phosphate + ADP. It participates in metabolic intermediate biosynthesis; acetyl-CoA biosynthesis; acetyl-CoA from acetate: step 1/2. Its function is as follows. Catalyzes the formation of acetyl phosphate from acetate and ATP. Can also catalyze the reverse reaction. The polypeptide is Acetate kinase (Streptococcus agalactiae serotype III (strain NEM316)).